Here is a 337-residue protein sequence, read N- to C-terminus: Ketol-acid reductoisomerase (NAD(P)(+)) (337 aa).

Positions 2–187 constitute a KARI N-terminal Rossmann domain; it reads ARMFYDADAN…GCTRAGVIET (186 aa). Residues 25-28, Arg48, and 88-91 contribute to the NADP(+) site; these read FGSQ and DEVQ. The active site involves His113. Gly139 contacts NADP(+). The region spanning 188 to 333 is the KARI C-terminal knotted domain; the sequence is SFQEETETDL…AELRGMMPWL (146 aa). Asp196, Glu200, Glu232, and Glu236 together coordinate Mg(2+). Substrate is bound at residue Ser257.

It belongs to the ketol-acid reductoisomerase family. Mg(2+) is required as a cofactor.

It carries out the reaction (2R)-2,3-dihydroxy-3-methylbutanoate + NAD(+) = (2S)-2-acetolactate + NADH + H(+). The catalysed reaction is (2R)-2,3-dihydroxy-3-methylbutanoate + NADP(+) = (2S)-2-acetolactate + NADPH + H(+). It participates in amino-acid biosynthesis; L-isoleucine biosynthesis; L-isoleucine from 2-oxobutanoate: step 2/4. The protein operates within amino-acid biosynthesis; L-valine biosynthesis; L-valine from pyruvate: step 2/4. Its function is as follows. Involved in the biosynthesis of branched-chain amino acids (BCAA). Catalyzes an alkyl-migration followed by a ketol-acid reduction of (S)-2-acetolactate (S2AL) to yield (R)-2,3-dihydroxy-isovalerate. In the isomerase reaction, S2AL is rearranged via a Mg-dependent methyl migration to produce 3-hydroxy-3-methyl-2-ketobutyrate (HMKB). In the reductase reaction, this 2-ketoacid undergoes a metal-dependent reduction by NADPH or NADH to yield (R)-2,3-dihydroxy-isovalerate. The chain is Ketol-acid reductoisomerase (NAD(P)(+)) from Syntrophomonas wolfei subsp. wolfei (strain DSM 2245B / Goettingen).